Reading from the N-terminus, the 498-residue chain is Putative phosphotransferase 057R (498 aa).

This is Putative phosphotransferase 057R from Dryophytes versicolor (chameleon treefrog).